Reading from the N-terminus, the 133-residue chain is Large ribosomal subunit protein bL19 (133 aa).

This sequence belongs to the bacterial ribosomal protein bL19 family.

This protein is located at the 30S-50S ribosomal subunit interface and may play a role in the structure and function of the aminoacyl-tRNA binding site. In Stenotrophomonas maltophilia (strain K279a), this protein is Large ribosomal subunit protein bL19.